Reading from the N-terminus, the 473-residue chain is H(+)/Cl(-) exchange transporter ClcA (473 aa).

The Cytoplasmic segment spans residues 1–32 (MKTDTPSLETPQAARLRRRQLIRQLLERDKTP). Residues 33 to 69 (LAILFMAAVVGTLVGLAAVAFDKGVAWLQNQRMGALV) traverse the membrane as a helical segment. Over 70 to 76 (HTADNYP) the chain is Periplasmic. A helical membrane pass occupies residues 77-100 (LLLTVAFLCSAVLAMFGYFLVRKY). The Selectivity filter part_1 signature appears at 106–110 (GSGIP). Ser107 provides a ligand contact to chloride. The helical intramembrane region spans 109–116 (IPEIEGAL). The Cytoplasmic segment spans residues 117 to 123 (EDQRPVR). 2 consecutive transmembrane segments (helical) span residues 124 to 141 (WWRVLPVKFFGGLGTLGG) and 148 to 166 (EGPTVQIGGNISRMVLDIF). Residues 146-150 (GREGP) carry the Selectivity filter part_2 motif. Residues 167–176 (RLKGDEARHT) are Cytoplasmic-facing. Intramembrane regions (helical) lie at residues 177–189 (LLATGAAAGLAAA) and 193–201 (PLAGILFII). Residues 202 to 214 (EEMRPQFRYTLIS) are Cytoplasmic-facing. Residues 215-232 (IKAVFIGVIMSTIMYRIF) form a helical membrane-spanning segment. Over 233–252 (NHEVALIDVGKLSDAPLNTL) the chain is Periplasmic. Residues 253-281 (WLYLILGIIFGIFGPIFNKWVLGMQDLLH) form a helical membrane-spanning segment. The Cytoplasmic segment spans residues 282 to 287 (RVHGGN). Residues 288–309 (ITKWVLMGGAIGGLCGLLGFVA) form a helical membrane-spanning segment. Over 310–329 (PATSGGGFNLIPIATAGNFS) the chain is Periplasmic. 2 helical membrane-spanning segments follow: residues 330–349 (MGMLVFIFVARVITTLLCFS) and 355–376 (GIFAPMLALGTVLGTAFGMVAV). The Selectivity filter part_3 motif lies at 355–359 (GIFAP). Chloride contacts are provided by Ile356 and Phe357. Topologically, residues 377-386 (ELFPQYHLEA) are periplasmic. An intramembrane region (helical) is located at residues 387-401 (GTFAIAGMGALLAAS). An intramembrane region (note=Loop between two helices) is located at residues 402–404 (IRA). Residues 405–416 (PLTGIILVLEMT) constitute an intramembrane region (helical). The note=Loop between two helices intramembrane region spans 417–421 (DNYQL). The chain crosses the membrane as a helical span at residues 422–438 (ILPMIITGLGATLLAQF). Over 439–473 (TGGKPLYSAILARTLAKQEAEQLARSKAASASENT) the chain is Cytoplasmic. A chloride-binding site is contributed by Tyr445.

Belongs to the chloride channel (TC 2.A.49) family. ClcA subfamily. As to quaternary structure, homodimer.

It is found in the cell inner membrane. It catalyses the reaction 2 chloride(in) + H(+)(out) = 2 chloride(out) + H(+)(in). Functionally, proton-coupled chloride transporter. Functions as antiport system and exchanges two chloride ions for 1 proton. Probably acts as an electrical shunt for an outwardly-directed proton pump that is linked to amino acid decarboxylation, as part of the extreme acid resistance (XAR) response. The chain is H(+)/Cl(-) exchange transporter ClcA from Shigella flexneri serotype 5b (strain 8401).